The following is a 230-amino-acid chain: UPF0500 protein C1orf216 homolog (230 aa).

A disordered region spans residues 1–103; that stretch reads MFAAIQPGLA…AEPEKLSGAS (103 aa). The span at 60-73 shows a compositional bias: polar residues; it reads RSSSESPSDNQVFQ. Low complexity predominate over residues 85–94; the sequence is PPEGAEIPGA.

Belongs to the UPF0500 family.

The chain is UPF0500 protein C1orf216 homolog from Mus musculus (Mouse).